The sequence spans 1940 residues: Myosin-2 (1940 aa).

Positions 33–82 (DAKTSVFVAEPKESFVKGTVQSREGGKVTVKTEAGATLTVKEDQVFPMNP) constitute a Myosin N-terminal SH3-like domain. T64 and T69 each carry phosphothreonine. A Myosin motor domain is found at 86–783 (DKIEDMAMMT…LLGLLEEMRD (698 aa)). The residue at position 130 (K130) is an N6,N6,N6-trimethyllysine. Residue 179–186 (GESGAGKT) participates in ATP binding. Y389 carries the phosphotyrosine modification. Residue S392 is modified to Phosphoserine. T419 is modified (phosphothreonine). At S625 the chain carries Phosphoserine. The actin-binding stretch occupies residues 660 to 682 (LNKLMTNLRSTHPHFVRCIIPNE). Position 758 is a pros-methylhistidine (H758). The actin-binding stretch occupies residues 762-776 (KFGHTKVFFKAGLLG). An IQ domain is found at 786–815 (LAQLITRTQARCRGFLARVEYQKMVERRES). Residues 844–1940 (LLKSAETEKE…EVHTKVISEE (1097 aa)) are a coiled coil. Phosphoserine is present on residues S1093, S1097, S1163, and S1238. A disordered region spans residues 1154 to 1173 (RLEEAGGATSAQIEMNKKRE). Phosphothreonine is present on T1242. S1244 bears the Phosphoserine mark. At T1256 the chain carries Phosphothreonine. S1262 carries the post-translational modification Phosphoserine. T1287 carries the phosphothreonine modification. Phosphoserine occurs at positions 1289, 1293, 1304, and 1307. Y1465 bears the Phosphotyrosine mark. T1468 is subject to Phosphothreonine. Phosphoserine is present on S1475. Y1493 carries the post-translational modification Phosphotyrosine. At S1496 the chain carries Phosphoserine. T1502 carries the post-translational modification Phosphothreonine. Position 1515 is a phosphoserine (S1515). T1518 is subject to Phosphothreonine. A phosphoserine mark is found at S1543, S1555, S1575, S1601, S1715, and S1727. 2 positions are modified to phosphothreonine: T1731 and T1737. S1740 is subject to Phosphoserine. A disordered region spans residues 1884–1920 (KRQAEEAEEQSNTNLSKFRKLQHELEEAEERADIAES).

Belongs to the TRAFAC class myosin-kinesin ATPase superfamily. Myosin family. Muscle myosin is a hexameric protein that consists of 2 heavy chain subunits (MHC), 2 alkali light chain subunits (MLC) and 2 regulatory light chain subunits (MLC-2). Interacts with GCSAM.

It localises to the cytoplasm. It is found in the myofibril. Its function is as follows. Myosins are actin-based motor molecules with ATPase activity essential for muscle contraction. This Canis lupus familiaris (Dog) protein is Myosin-2 (MYH2).